The primary structure comprises 246 residues: Apolipoprotein L domain-containing protein 1 (246 aa).

The next 2 membrane-spanning stretches (helical) occupy residues 50-72 and 89-109; these read SLAANVAGSSLSAAGALAAIVGL and GLGVATAGGAVTITSDLSLIF. Residues 193–220 are a coiled coil; the sequence is LKAKIQKLSESLESCTGALDELSEQLES.

It belongs to the apolipoprotein L family. Present at low levels in brain vascular cells (at protein level).

The protein resides in the cell membrane. It localises to the cell junction. The protein localises to the cytoplasmic vesicle. Its subcellular location is the secretory vesicle. Is a modulator of endothelial barrier permeability, required for proper organization of endothelial cell-cell junctions and cytoskeleton. It also plays a role in the modulation of secretory autophagy. May affect blood-brain barrier permeability. In Rattus norvegicus (Rat), this protein is Apolipoprotein L domain-containing protein 1 (Apold1).